Here is a 160-residue protein sequence, read N- to C-terminus: Cytochrome b6-f complex subunit 4 (160 aa).

The next 3 membrane-spanning stretches (helical) occupy residues 36 to 56, 95 to 115, and 128 to 148; these read LLYI…GLSV, LLGI…PFIE, and IAMA…IGAA.

The protein belongs to the cytochrome b family. PetD subfamily. The 4 large subunits of the cytochrome b6-f complex are cytochrome b6, subunit IV (17 kDa polypeptide, PetD), cytochrome f and the Rieske protein, while the 4 small subunits are PetG, PetL, PetM and PetN. The complex functions as a dimer.

Its subcellular location is the cellular thylakoid membrane. Component of the cytochrome b6-f complex, which mediates electron transfer between photosystem II (PSII) and photosystem I (PSI), cyclic electron flow around PSI, and state transitions. The protein is Cytochrome b6-f complex subunit 4 of Synechococcus sp. (strain CC9311).